Consider the following 117-residue polypeptide: Protein Rev (117 aa).

2 positions are modified to phosphoserine; by host CK2: S5 and S8. Residues 18–26 (LIKILYQSN) form a homomultimerization region. Residues 24 to 49 (QSNPPPNTEGTTRQARRNRRRRWRAR) form a disordered region. Residues 35–51 (TRQARRNRRRRWRARQR) carry the Nuclear localization signal and RNA-binding (RRE) motif. The segment covering 37 to 49 (QARRNRRRRWRAR) has biased composition (basic residues). A Nuclear export signal and binding to XPO1 motif is present at residues 74 to 85 (LQLPPLERLTLN). Phosphoserine; by host is present on residues S93 and S100. Residues 93–105 (SGTQGVGSPQISV) are compositionally biased toward polar residues. Positions 93–117 (SGTQGVGSPQISVESPAILGSGTEE) are disordered.

It belongs to the HIV-1 REV protein family. Homomultimer; when bound to the RRE. Multimeric assembly is essential for activity and may involve XPO1. Binds to human KPNB1, XPO1, TNPO1, RANBP5 and IPO7. Interacts with the viral Integrase. Interacts with human KHDRBS1. Interacts with human NAP1; this interaction decreases Rev multimerization and stimulates its activity. Interacts with human DEAD-box helicases DDX3 and DDX24; these interactions may serve for viral RNA export to the cytoplasm and packaging, respectively. Interacts with human PSIP1; this interaction may inhibit HIV-1 DNA integration by promoting dissociation of the Integrase-LEDGF/p75 complex. Post-translationally, asymmetrically arginine dimethylated at one site by host PRMT6. Methylation impairs the RNA-binding activity and export of viral RNA from the nucleus to the cytoplasm. In terms of processing, phosphorylated by protein kinase CK2. Presence of, and maybe binding to the N-terminus of the regulatory beta subunit of CK2 is necessary for CK2-mediated Rev's phosphorylation.

The protein localises to the host nucleus. The protein resides in the host nucleolus. It localises to the host cytoplasm. Functionally, escorts unspliced or incompletely spliced viral pre-mRNAs (late transcripts) out of the nucleus of infected cells. These pre-mRNAs carry a recognition sequence called Rev responsive element (RRE) located in the env gene, that is not present in fully spliced viral mRNAs (early transcripts). This function is essential since most viral proteins are translated from unspliced or partially spliced pre-mRNAs which cannot exit the nucleus by the pathway used by fully processed cellular mRNAs. Rev itself is translated from a fully spliced mRNA that readily exits the nucleus. Rev's nuclear localization signal (NLS) binds directly to KPNB1/Importin beta-1 without previous binding to KPNA1/Importin alpha-1. KPNB1 binds to the GDP bound form of RAN (Ran-GDP) and targets Rev to the nucleus. In the nucleus, the conversion from Ran-GDP to Ran-GTP dissociates Rev from KPNB1 and allows Rev's binding to the RRE in viral pre-mRNAs. Rev multimerization on the RRE via cooperative assembly exposes its nuclear export signal (NES) to the surface. Rev can then form a complex with XPO1/CRM1 and Ran-GTP, leading to nuclear export of the complex. Conversion from Ran-GTP to Ran-GDP mediates dissociation of the Rev/RRE/XPO1/RAN complex, so that Rev can return to the nucleus for a subsequent round of export. Beside KPNB1, also seems to interact with TNPO1/Transportin-1, RANBP5/IPO5 and IPO7/RANBP7 for nuclear import. The nucleoporin-like HRB/RIP is an essential cofactor that probably indirectly interacts with Rev to release HIV RNAs from the perinuclear region to the cytoplasm. This is Protein Rev from Human immunodeficiency virus type 1 group M subtype A (isolate MAL) (HIV-1).